Consider the following 339-residue polypeptide: Dihydroorotase (339 aa).

The Zn(2+) site is built by His-12 and His-14. Residues 14 to 16 and Asn-40 contribute to the substrate site; that span reads HVR. 4 residues coordinate Zn(2+): Lys-94, His-133, His-167, and Asp-239. Position 94 is an N6-carboxylysine (Lys-94). Position 133 (His-133) interacts with substrate. Asp-239 is an active-site residue. The substrate site is built by His-243 and Ala-255.

The protein belongs to the metallo-dependent hydrolases superfamily. DHOase family. Class II DHOase subfamily. In terms of assembly, homodimer. Requires Zn(2+) as cofactor.

The catalysed reaction is (S)-dihydroorotate + H2O = N-carbamoyl-L-aspartate + H(+). It functions in the pathway pyrimidine metabolism; UMP biosynthesis via de novo pathway; (S)-dihydroorotate from bicarbonate: step 3/3. Functionally, catalyzes the reversible cyclization of carbamoyl aspartate to dihydroorotate. The chain is Dihydroorotase from Helicobacter pylori (strain ATCC 700392 / 26695) (Campylobacter pylori).